The primary structure comprises 892 residues: Protein FAM193B (892 aa).

Disordered regions lie at residues 1–78 (MTRR…TSSQ), 164–192 (SCGG…NSGD), 237–321 (EHHQ…PLLK), and 379–403 (DEGL…THPR). The span at 28 to 37 (APEPQPPPPS) shows a compositional bias: pro residues. The span at 56-65 (DGPREEEEPK) shows a compositional bias: basic and acidic residues. Over residues 169 to 185 (SHSSSSSSSSSSSSSSS) the composition is skewed to low complexity. 3 stretches are compositionally biased toward pro residues: residues 248-258 (PNSPTGPPPHP), 274-285 (YPPPLPTTPVAP), and 309-321 (SPHP…PLLK). Residues 379–388 (DEGLGEEEDS) are compositionally biased toward acidic residues. Over residues 391 to 400 (ERSSCTSSST) the composition is skewed to low complexity. A coiled-coil region spans residues 485–517 (NSARAAKRARHKLKKKEKEKARLATEALKQVNR). Polar residues-rich tracts occupy residues 587–597 (LTPSDLSGSSQ) and 610–621 (TLGSPQSHTLQA). 2 disordered regions span residues 587–655 (LTPS…ENGL) and 671–837 (VKTP…SLDD). Over residues 637 to 650 (PPPWTEVRGPPPGI) the composition is skewed to pro residues. A compositionally biased stretch (low complexity) spans 736–757 (KSQVSSPKQPSKGSEPAKVGSG). A phosphoserine mark is found at Ser764, Ser776, and Ser882.

This sequence belongs to the FAM193 family.

It localises to the cytoplasm. Its subcellular location is the nucleus. This chain is Protein FAM193B (Fam193b), found in Mus musculus (Mouse).